Reading from the N-terminus, the 141-residue chain is Putative pre-16S rRNA nuclease (141 aa).

Belongs to the YqgF nuclease family.

It is found in the cytoplasm. Its function is as follows. Could be a nuclease involved in processing of the 5'-end of pre-16S rRNA. The sequence is that of Putative pre-16S rRNA nuclease from Roseiflexus sp. (strain RS-1).